The primary structure comprises 936 residues: E3 ubiquitin-protein ligase ZNRF3 (936 aa).

Residues 1 to 31 (MRPRSGGRPGATGRRRRRLRRRPRGLRCSRL) are disordered. Positions 1 to 55 (MRPRSGGRPGATGRRRRRLRRRPRGLRCSRLPPPPPLPLLLGLLLAAAGPGAARA) are cleaved as a signal peptide. Basic residues predominate over residues 13-27 (GRRRRRLRRRPRGLR). The Extracellular segment spans residues 56 to 219 (KETAFVEVVL…PRQPTEYFDM (164 aa)). The chain crosses the membrane as a helical span at residues 220–240 (GIFLAFFVVVSLVCLILLVKI). Residues 241–936 (KLKQRRSQNS…HSADSSSPGA (696 aa)) lie on the Cytoplasmic side of the membrane. The RING-type; atypical zinc-finger motif lies at 293–334 (CAICLEKYIDGEELRVIPCTHRFHRKCVDPWLLQHHTCPHCR). Disordered stretches follow at residues 608–693 (SEAG…SPGA), 739–758 (LYEG…SQGL), 849–875 (THSL…ATRE), and 892–936 (CPPE…SPGA). Positions 654–684 (SGDQVSTCSLEMNYSSNSSLEHRGPNSSTSE) are enriched in polar residues. Over residues 913 to 922 (ESSTTATEAA) the composition is skewed to low complexity.

This sequence belongs to the ZNRF3 family. As to quaternary structure, interacts with LRP6, FZD4, FZD5, FZD6 and FZD8. Interacts with RSPO1; interaction promotes indirect interaction with LGR4 and membrane clearance of ZNRF3. Also interacts with RSPO2. Interacts with LMBR1L.

The protein resides in the cell membrane. It catalyses the reaction S-ubiquitinyl-[E2 ubiquitin-conjugating enzyme]-L-cysteine + [acceptor protein]-L-lysine = [E2 ubiquitin-conjugating enzyme]-L-cysteine + N(6)-ubiquitinyl-[acceptor protein]-L-lysine.. Its pathway is protein modification; protein ubiquitination. Negatively regulated by R-spondin proteins such as RSPO1: interaction with RSPO1 induces the indirect association between ZNRF3 and LGR4, promoting membrane clearance of ZNRF3. E3 ubiquitin-protein ligase that acts as a negative regulator of the Wnt signaling pathway by mediating the ubiquitination and subsequent degradation of Wnt receptor complex components Frizzled and LRP6. Acts on both canonical and non-canonical Wnt signaling pathway. Acts as a tumor suppressor in the intestinal stem cell zone by inhibiting the Wnt signaling pathway, thereby restricting the size of the intestinal stem cell zone. Along with RSPO2 and RNF43, constitutes a master switch that governs limb specification. The sequence is that of E3 ubiquitin-protein ligase ZNRF3 (ZNRF3) from Homo sapiens (Human).